Consider the following 359-residue polypeptide: 3-dehydroquinate synthase (359 aa).

Residues 71–76, 105–109, 129–130, lysine 142, and lysine 151 contribute to the NAD(+) site; these read DGEAYK, GVIGD, and TT. Residues glutamate 184, histidine 247, and histidine 264 each coordinate Zn(2+).

This sequence belongs to the sugar phosphate cyclases superfamily. Dehydroquinate synthase family. Co(2+) is required as a cofactor. Requires Zn(2+) as cofactor. It depends on NAD(+) as a cofactor.

Its subcellular location is the cytoplasm. The catalysed reaction is 7-phospho-2-dehydro-3-deoxy-D-arabino-heptonate = 3-dehydroquinate + phosphate. Its pathway is metabolic intermediate biosynthesis; chorismate biosynthesis; chorismate from D-erythrose 4-phosphate and phosphoenolpyruvate: step 2/7. Its function is as follows. Catalyzes the conversion of 3-deoxy-D-arabino-heptulosonate 7-phosphate (DAHP) to dehydroquinate (DHQ). In Burkholderia ambifaria (strain ATCC BAA-244 / DSM 16087 / CCUG 44356 / LMG 19182 / AMMD) (Burkholderia cepacia (strain AMMD)), this protein is 3-dehydroquinate synthase.